Reading from the N-terminus, the 137-residue chain is Small ribosomal subunit protein uS9 (137 aa).

The tract at residues Lys-118–Arg-137 is disordered.

Belongs to the universal ribosomal protein uS9 family.

The chain is Small ribosomal subunit protein uS9 from Acaryochloris marina (strain MBIC 11017).